Reading from the N-terminus, the 23-residue chain is Cysteine-rich venom protein 24 (23 aa).

The disordered stretch occupies residues 1 to 23 (VDFASESXNKRENQQIVDKHNAL). Residues 8 to 23 (XNKRENQQIVDKHNAL) are compositionally biased toward basic and acidic residues.

The protein belongs to the CRISP family. Contains 8 disulfide bonds. In terms of tissue distribution, expressed by the venom gland.

It is found in the secreted. The protein is Cysteine-rich venom protein 24 of Naja kaouthia (Monocled cobra).